Here is a 216-residue protein sequence, read N- to C-terminus: Transmembrane protein 139 (216 aa).

Residues 1 to 25 form the signal peptide; that stretch reads MVPMHLLGRLEKPLLLLCCASFLLG. The Extracellular portion of the chain corresponds to 26-34; that stretch reads LALLGIKTD. The helical transmembrane segment at 35 to 55 threads the bilayer; the sequence is ITPVAYFFLTLGGFFLFAYLL. At 56–216 the chain is on the cytoplasmic side; it reads VRFLEWGLRS…VFYEDNWAPP (161 aa). The interval 104-163 is disordered; it reads RPQELDQPPPYSTVVIPPAPEEEQPSHPEGSRRAKLEQRRMASEGSMAQEGSPGRAPINL. The span at 127-145 shows a compositional bias: basic and acidic residues; the sequence is QPSHPEGSRRAKLEQRRMA. Residues Ser146 and Ser155 each carry the phosphoserine modification.

As to quaternary structure, interacts with isoform 2 of SLC4A1.

It is found in the membrane. In terms of biological role, may be involved in cellular trafficking of proteins such as SLC4A1. This Homo sapiens (Human) protein is Transmembrane protein 139 (TMEM139).